A 444-amino-acid chain; its full sequence is Proline--tRNA ligase (444 aa).

The protein belongs to the class-II aminoacyl-tRNA synthetase family. ProS type 2 subfamily. As to quaternary structure, homodimer.

The protein resides in the cytoplasm. The catalysed reaction is tRNA(Pro) + L-proline + ATP = L-prolyl-tRNA(Pro) + AMP + diphosphate. In terms of biological role, catalyzes the attachment of proline to tRNA(Pro) in a two-step reaction: proline is first activated by ATP to form Pro-AMP and then transferred to the acceptor end of tRNA(Pro). This chain is Proline--tRNA ligase, found in Pelagibacter ubique (strain HTCC1062).